Reading from the N-terminus, the 510-residue chain is ATP synthase subunit alpha (510 aa).

ATP is bound at residue 169-176 (GDRQTGKT).

This sequence belongs to the ATPase alpha/beta chains family. As to quaternary structure, F-type ATPases have 2 components, CF(1) - the catalytic core - and CF(0) - the membrane proton channel. CF(1) has five subunits: alpha(3), beta(3), gamma(1), delta(1), epsilon(1). CF(0) has three main subunits: a(1), b(2) and c(9-12). The alpha and beta chains form an alternating ring which encloses part of the gamma chain. CF(1) is attached to CF(0) by a central stalk formed by the gamma and epsilon chains, while a peripheral stalk is formed by the delta and b chains.

Its subcellular location is the cell inner membrane. It carries out the reaction ATP + H2O + 4 H(+)(in) = ADP + phosphate + 5 H(+)(out). Functionally, produces ATP from ADP in the presence of a proton gradient across the membrane. The alpha chain is a regulatory subunit. This chain is ATP synthase subunit alpha, found in Nitrobacter winogradskyi (strain ATCC 25391 / DSM 10237 / CIP 104748 / NCIMB 11846 / Nb-255).